The primary structure comprises 233 residues: Large ribosomal subunit protein uL1 (233 aa).

It belongs to the universal ribosomal protein uL1 family. In terms of assembly, part of the 50S ribosomal subunit.

Its function is as follows. Binds directly to 23S rRNA. The L1 stalk is quite mobile in the ribosome, and is involved in E site tRNA release. Protein L1 is also a translational repressor protein, it controls the translation of the L11 operon by binding to its mRNA. In Shewanella halifaxensis (strain HAW-EB4), this protein is Large ribosomal subunit protein uL1.